We begin with the raw amino-acid sequence, 95 residues long: Citrate lyase acyl carrier protein (95 aa).

S14 carries the post-translational modification O-(phosphoribosyl dephospho-coenzyme A)serine.

It belongs to the CitD family. In terms of assembly, oligomer with a subunit composition of (alpha,beta,gamma)6.

Its subcellular location is the cytoplasm. Covalent carrier of the coenzyme of citrate lyase. In Haemophilus ducreyi (strain 35000HP / ATCC 700724), this protein is Citrate lyase acyl carrier protein.